The primary structure comprises 373 residues: Mannitol-1-phosphate 5-dehydrogenase (373 aa).

3 to 14 (ALHFGAGNIGRG) is a binding site for NAD(+).

It belongs to the mannitol dehydrogenase family.

It catalyses the reaction D-mannitol 1-phosphate + NAD(+) = beta-D-fructose 6-phosphate + NADH + H(+). The polypeptide is Mannitol-1-phosphate 5-dehydrogenase (Bacillus velezensis (strain DSM 23117 / BGSC 10A6 / LMG 26770 / FZB42) (Bacillus amyloliquefaciens subsp. plantarum)).